The primary structure comprises 253 residues: Prepilin leader peptidase/N-methyltransferase (253 aa).

The chain crosses the membrane as a helical span at residues 4–24; sequence VYLILFSIVSLILGSFSNVVI. Cys48, Cys51, Cys73, and Cys76 together coordinate Zn(2+). 6 consecutive transmembrane segments (helical) span residues 80 to 100, 106 to 126, 129 to 149, 159 to 179, 198 to 218, and 230 to 250; these read ISLS…PIYW, VDSF…VIDF, MLLP…YVQQ, IIGG…VRLF, TLIG…IAFI, and CLYI…FFSI.

This sequence belongs to the peptidase A24 family. Zn(2+) serves as cofactor.

It is found in the cell inner membrane. It carries out the reaction Typically cleaves a -Gly-|-Phe- bond to release an N-terminal, basic peptide of 5-8 residues from type IV prepilin, and then N-methylates the new N-terminal amino group, the methyl donor being S-adenosyl-L-methionine.. Its function is as follows. Plays an essential role in type IV pili and type II pseudopili formation by proteolytically removing the leader sequence from substrate proteins and subsequently monomethylating the alpha-amino group of the newly exposed N-terminal phenylalanine. The polypeptide is Prepilin leader peptidase/N-methyltransferase (tcpJ) (Vibrio cholerae serotype O1 (strain ATCC 39315 / El Tor Inaba N16961)).